A 272-amino-acid chain; its full sequence is Phosphate import ATP-binding protein PstB (272 aa).

The ABC transporter domain maps to 26 to 267 (LEIRNLDLSY…PRKRKTEDYI (242 aa)). 58 to 65 (GPSGCGKS) provides a ligand contact to ATP.

This sequence belongs to the ABC transporter superfamily. Phosphate importer (TC 3.A.1.7) family. As to quaternary structure, the complex is composed of two ATP-binding proteins (PstB), two transmembrane proteins (PstC and PstA) and a solute-binding protein (PstS).

Its subcellular location is the cell inner membrane. It carries out the reaction phosphate(out) + ATP + H2O = ADP + 2 phosphate(in) + H(+). In terms of biological role, part of the ABC transporter complex PstSACB involved in phosphate import. Responsible for energy coupling to the transport system. The chain is Phosphate import ATP-binding protein PstB from Shewanella denitrificans (strain OS217 / ATCC BAA-1090 / DSM 15013).